A 209-amino-acid polypeptide reads, in one-letter code: Dof zinc finger protein DOF1.6 (209 aa).

Residues 1 to 17 (MPSEPNQTRPTRVQPST) show a composition bias toward polar residues. The disordered stretch occupies residues 1–29 (MPSEPNQTRPTRVQPSTAAYPPPNLAEPL). Residues 20 to 29 (YPPPNLAEPL) show a composition bias toward pro residues. The Dof-type zinc-finger motif lies at 29-83 (LPCPRCNSTTTKFCYYNNYNLAQPRYYCKSCRRYWTQGGTLRDVPVGGGTRRSSS). C31, C34, C56, and C59 together coordinate Zn(2+). The segment at 70 to 116 (RDVPVGGGTRRSSSKRHRSFSTTATSSSSSSSVITTTTQEPATTEAS) is disordered. Positions 89-116 (FSTTATSSSSSSSVITTTTQEPATTEAS) are enriched in low complexity.

The protein localises to the nucleus. In terms of biological role, transcription factor that binds specifically to a 5'-AA[AG]G-3' consensus core sequence. This is Dof zinc finger protein DOF1.6 (DOF1.6) from Arabidopsis thaliana (Mouse-ear cress).